A 946-amino-acid chain; its full sequence is Ent-kaur-16-ene synthase (946 aa).

Mg(2+) is bound by residues D656, E660, N839, D840, S843, and D847. The DEXXE motif motif lies at 656–660; the sequence is DEFFE.

Belongs to the terpene synthase family. Mg(2+) serves as cofactor.

The enzyme catalyses ent-copalyl diphosphate = ent-kaur-16-ene + diphosphate. The catalysed reaction is (2E,6E,10E)-geranylgeranyl diphosphate = ent-copalyl diphosphate. It participates in plant hormone biosynthesis; gibberellin biosynthesis. Catalyzes the conversion of geranylgeranyl diphosphate to the gibberellin precursor ent-kaurene diphosphate in a two step process. This is Ent-kaur-16-ene synthase from Phaeosphaeria sp. (strain L487).